A 466-amino-acid polypeptide reads, in one-letter code: ATP synthase subunit beta (466 aa).

155 to 162 (GGAGVGKT) is an ATP binding site.

It belongs to the ATPase alpha/beta chains family. In terms of assembly, F-type ATPases have 2 components, CF(1) - the catalytic core - and CF(0) - the membrane proton channel. CF(1) has five subunits: alpha(3), beta(3), gamma(1), delta(1), epsilon(1). CF(0) has three main subunits: a(1), b(2) and c(9-12). The alpha and beta chains form an alternating ring which encloses part of the gamma chain. CF(1) is attached to CF(0) by a central stalk formed by the gamma and epsilon chains, while a peripheral stalk is formed by the delta and b chains.

It localises to the cell inner membrane. It catalyses the reaction ATP + H2O + 4 H(+)(in) = ADP + phosphate + 5 H(+)(out). Functionally, produces ATP from ADP in the presence of a proton gradient across the membrane. The catalytic sites are hosted primarily by the beta subunits. The protein is ATP synthase subunit beta of Bordetella pertussis (strain Tohama I / ATCC BAA-589 / NCTC 13251).